Here is a 382-residue protein sequence, read N- to C-terminus: uncharacterized protein (382 aa).

The next 12 helical transmembrane spans lie at 14–34 (GLLL…LWLA), 45–65 (VVSS…GYVI), 79–99 (FIFA…SWLA), 102–122 (FVAG…LMCS), 131–151 (LLAA…LLVS), 157–177 (LMSV…PLLF), 204–224 (LGVN…GLMP), 235–255 (ASIG…QWPI), 270–290 (VQVF…AMAP), 291–311 (ALFI…AWAC), 325–345 (ALLL…AMLM), and 348–368 (FSDN…LLML).

It belongs to the major facilitator superfamily. YcaD (TC 2.A.1.26) family.

Its subcellular location is the cell inner membrane. This is an uncharacterized protein from Escherichia coli (strain K12 / MC4100 / BW2952).